Reading from the N-terminus, the 468-residue chain is FAD-linked oxidoreductase hasG (468 aa).

The FAD-binding PCMH-type domain occupies 37–211 (LGKIPAAVVQ…VEATFRAYPW (175 aa)).

This sequence belongs to the oxygen-dependent FAD-linked oxidoreductase family. FAD is required as a cofactor.

The protein operates within secondary metabolite biosynthesis. In terms of biological role, FAD-linked oxidoreductase; part of the gene cluster that mediates the biosynthesis of hexadehydro-astechrome (HAS), a tryptophan-derived iron(III)-complex that acts as a virulence factor in infected mice. Within the pathway, hasG converts the prenyl to a methylbutadienyl side chain. The HAS biosynthesis begins with the synthesis of a tethered Trp-Ala dipeptide by the NRPS hasD. The 7-dimethylallyltryptophan synthase hasE then catalyzes the prenylation of the hasD-tethered tryptophan or the resulting tethered Trp-Ala dipeptide at the C-7 position of the indole moiety. HAS biosynthesis continues via tethered intermediates with the succesive actions of the cytochrome P450 monooxygenase hasH, the O-methyltransferase hasC, and the FAD-linked oxidoreductase hasG. The resulting O-methylated diketopiperazine is then released from hasD. Finally, three O-methylated diketopiperazine molecules assemble in a trimeric complex with Fe(III) to produce hexadehydro-astechrome. The protein is FAD-linked oxidoreductase hasG of Aspergillus fumigatus (strain CBS 144.89 / FGSC A1163 / CEA10) (Neosartorya fumigata).